Reading from the N-terminus, the 261-residue chain is Indole-3-glycerol phosphate synthase (261 aa).

Belongs to the TrpC family.

The catalysed reaction is 1-(2-carboxyphenylamino)-1-deoxy-D-ribulose 5-phosphate + H(+) = (1S,2R)-1-C-(indol-3-yl)glycerol 3-phosphate + CO2 + H2O. The protein operates within amino-acid biosynthesis; L-tryptophan biosynthesis; L-tryptophan from chorismate: step 4/5. The protein is Indole-3-glycerol phosphate synthase of Campylobacter hominis (strain ATCC BAA-381 / DSM 21671 / CCUG 45161 / LMG 19568 / NCTC 13146 / CH001A).